The chain runs to 293 residues: Glutamyl-Q tRNA(Asp) synthetase (293 aa).

L-glutamate-binding positions include 8 to 12 and Glu-44; that span reads RFAPT. A 'HIGH' region motif is present at residues 11 to 21; sequence PTPSGYLHFGS. 4 residues coordinate Zn(2+): Cys-100, Cys-102, Tyr-114, and Cys-118. Residues Tyr-171 and Arg-189 each coordinate L-glutamate. The 'KMSKS' region motif lies at 227–231; it reads KLGKS. Residue Lys-230 participates in ATP binding.

Belongs to the class-I aminoacyl-tRNA synthetase family. GluQ subfamily. Zn(2+) serves as cofactor.

Functionally, catalyzes the tRNA-independent activation of glutamate in presence of ATP and the subsequent transfer of glutamate onto a tRNA(Asp). Glutamate is transferred on the 2-amino-5-(4,5-dihydroxy-2-cyclopenten-1-yl) moiety of the queuosine in the wobble position of the QUC anticodon. The protein is Glutamyl-Q tRNA(Asp) synthetase of Pseudomonas aeruginosa (strain LESB58).